The primary structure comprises 663 residues: Translation factor guf1, mitochondrial (663 aa).

A mitochondrion-targeting transit peptide spans 1–51 (MRGCLQVLRWLSTSTARRPVSSRPLHEIFPKSEFRRPFTSTILRQAQASRN). The tr-type G domain occupies 65–245 (ERFRNFCIVA…TVIERIPAPV (181 aa)). GTP is bound by residues 74–81 (AHVDHGKS), 138–142 (DTPGH), and 192–195 (NKVD).

This sequence belongs to the TRAFAC class translation factor GTPase superfamily. Classic translation factor GTPase family. LepA subfamily.

It localises to the mitochondrion inner membrane. It carries out the reaction GTP + H2O = GDP + phosphate + H(+). Promotes mitochondrial protein synthesis. May act as a fidelity factor of the translation reaction, by catalyzing a one-codon backward translocation of tRNAs on improperly translocated ribosomes. Binds to mitochondrial ribosomes in a GTP-dependent manner. The polypeptide is Translation factor guf1, mitochondrial (guf1) (Talaromyces marneffei (strain ATCC 18224 / CBS 334.59 / QM 7333) (Penicillium marneffei)).